Reading from the N-terminus, the 514-residue chain is Putative selenium-binding protein (514 aa).

This sequence belongs to the selenium-binding protein family.

The protein is Putative selenium-binding protein of Caenorhabditis briggsae.